A 1923-amino-acid polypeptide reads, in one-letter code: GREB1-like protein (1923 aa).

Residues glutamate 87–serine 96 show a composition bias toward acidic residues. Disordered stretches follow at residues glutamate 87 to proline 111, serine 246 to lysine 326, and arginine 1101 to arginine 1222. Over residues proline 252–proline 262 the composition is skewed to low complexity. 3 stretches are compositionally biased toward polar residues: residues glutamate 263–aspartate 278, threonine 296–proline 307, and proline 1119–threonine 1161. The segment covering serine 1195 to serine 1206 has biased composition (low complexity). The helical transmembrane segment at glycine 1843 to leucine 1862 threads the bilayer.

It belongs to the GREB1 family. In terms of tissue distribution, widely expressed, with prominent expression in the cochlea. Expressed at high levels in fetal kidney. In adult tissues, highest levels in vagina, cervix and epididymis.

The protein resides in the membrane. In terms of biological role, plays a major role in early metanephros and genital development. The polypeptide is GREB1-like protein (GREB1L) (Homo sapiens (Human)).